The primary structure comprises 209 residues: Outer-membrane lipoprotein carrier protein (209 aa).

Residues 1–21 (MHRQLRYAVLATALFASTAFA) form the signal peptide.

The protein belongs to the LolA family. As to quaternary structure, monomer.

The protein resides in the periplasm. In terms of biological role, participates in the translocation of lipoproteins from the inner membrane to the outer membrane. Only forms a complex with a lipoprotein if the residue after the N-terminal Cys is not an aspartate (The Asp acts as a targeting signal to indicate that the lipoprotein should stay in the inner membrane). The chain is Outer-membrane lipoprotein carrier protein from Xanthomonas oryzae pv. oryzae (strain MAFF 311018).